The primary structure comprises 426 residues: Tryptophan--tRNA ligase (426 aa).

A 'HIGH' region motif is present at residues 66–74 (PSGEMHLGN). The short motif at 314–318 (KMSSS) is the 'KMSKS' region element.

Belongs to the class-I aminoacyl-tRNA synthetase family.

It localises to the cytoplasm. It carries out the reaction tRNA(Trp) + L-tryptophan + ATP = L-tryptophyl-tRNA(Trp) + AMP + diphosphate + H(+). This is Tryptophan--tRNA ligase from Thermoplasma volcanium (strain ATCC 51530 / DSM 4299 / JCM 9571 / NBRC 15438 / GSS1).